A 94-amino-acid polypeptide reads, in one-letter code: Mitochondrial import inner membrane translocase subunit Tim8 A (94 aa).

A Twin CX3C motif motif is present at residues 47–70 (CWDKCIDRPGNKLDSRTESCLVSC). 2 cysteine pairs are disulfide-bonded: Cys-47/Cys-70 and Cys-51/Cys-66.

This sequence belongs to the small Tim family. Heterohexamer; composed of 3 copies of TIMM8A and 3 copies of TIMM13, named soluble 70 kDa complex. Associates with the TIM22 complex, whose core is composed of TIMM22.

The protein resides in the mitochondrion inner membrane. Mitochondrial intermembrane chaperone that participates in the import and insertion of some multi-pass transmembrane proteins into the mitochondrial inner membrane. Also required for the transfer of beta-barrel precursors from the TOM complex to the sorting and assembly machinery (SAM complex) of the outer membrane. Acts as a chaperone-like protein that protects the hydrophobic precursors from aggregation and guide them through the mitochondrial intermembrane space. The TIMM8-TIMM13 complex mediates the import of some proteins while the predominant TIMM9-TIMM10 70 kDa complex mediates the import of much more proteins. This Xenopus laevis (African clawed frog) protein is Mitochondrial import inner membrane translocase subunit Tim8 A (timm8a).